We begin with the raw amino-acid sequence, 912 residues long: Rho guanine nucleotide exchange factor 1 (912 aa).

Residues 41-232 form the RGSL domain; it reads EQNSQFQSLE…GLYMRHLGVR (192 aa). Positions 248 to 413 are disordered; that stretch reads KVMGNRRSDE…PDTLHSLPKS (166 aa). Positions 283 to 313 are enriched in basic and acidic residues; sequence DFRHLKAEVDAEKPGATDRKGGVGMPSRDRN. The span at 365 to 381 shows a compositional bias: acidic residues; it reads STDEGAETESPEPGDEG. Ser374 and Ser409 each carry phosphoserine. The DH domain maps to 416–605; it reads KRQEVISELL…REILHHVNQA (190 aa). A PH domain is found at 647–760; it reads KLVHEGPLTW…WCALITETAG (114 aa). At Thr695 the chain carries Phosphothreonine. Tyr738 is subject to Phosphotyrosine; by JAK2. Disordered regions lie at residues 763–802 and 841–865; these read KVPA…PADA and AEED…LSPA. The segment covering 777-789 has biased composition (low complexity); sequence PSSTREPLLSSSE. Ser863 carries the phosphoserine modification. Positions 865–896 form a coiled coil; it reads ARTQEIQENLLSLEETMKQLEELEEEFCRLRP.

As to quaternary structure, interacts with RHOA, GNA12 and GNA13. Homooligomerizes through the coiled coil region. May interact with CCPG1. Interacts with CTNNAL1. Post-translationally, phosphorylated by PKCA. Angiotensin-2 induced Tyr-738 phosphorylation is mediated by JAK2. As to expression, ubiquitously expressed.

The protein resides in the cytoplasm. It localises to the membrane. Its function is as follows. Seems to play a role in the regulation of RhoA GTPase by guanine nucleotide-binding alpha-12 (GNA12) and alpha-13 (GNA13) subunits. Acts as a GTPase-activating protein (GAP) for GNA12 and GNA13, and as guanine nucleotide exchange factor (GEF) for RhoA GTPase. Activated G alpha 13/GNA13 stimulates the RhoGEF activity through interaction with the RGS-like domain. This GEF activity is inhibited by binding to activated GNA12. Mediates angiotensin-2-induced RhoA activation. In lymphoid follicles, may trigger activation of GNA13 as part of S1PR2-dependent signaling pathway that leads to inhibition of germinal center (GC) B cell growth and migration outside the GC niche. The polypeptide is Rho guanine nucleotide exchange factor 1 (ARHGEF1) (Homo sapiens (Human)).